Consider the following 459-residue polypeptide: tRNA uridine(34) acetyltransferase (459 aa).

The radical S-adenosyl-L-methionine (rSAM) stretch occupies residues methionine 1–valine 278. Residues arginine 6–proline 271 form the Radical SAM core domain. Cysteine 23, cysteine 27, and cysteine 30 together coordinate [4Fe-4S] cluster. An acetyl-CoA-binding site is contributed by lysine 77. Residues glutamine 308–aspartate 459 form an N-acetyltransferase region. Residues cysteine 310, cysteine 312, and cysteine 315 each contribute to the Zn(2+) site. Acetyl-CoA is bound by residues glutamate 386–valine 389, leucine 409–arginine 411, and tyrosine 442.

Belongs to the ELP3 family. In terms of assembly, homodimer. Requires [4Fe-4S] cluster as cofactor.

The catalysed reaction is uridine(34) in tRNA + acetyl-CoA + S-adenosyl-L-methionine + H2O = 5-(carboxymethyl)uridine(34) in tRNA + 5'-deoxyadenosine + L-methionine + CoA + 2 H(+). Its pathway is tRNA modification. Its function is as follows. tRNA uridine(34) acetyltransferase, which mediates formation of carboxymethyluridine in the wobble base at position 34 in tRNAs. The proposed mechanism is the following: (i) recruits S-adenosyl-L-methionine and cleaves it to generate a 5'-deoxyadenosine radical (5'-dA) in the radical S-adenosyl-L-methionine (rSAM) region, (ii) hydrolyzes acetyl-CoA in the N-acetyltransferase domain and (iii) an acetyl radical is formed by the products of the two domains and (iv) is transferred onto the C5 position of uridine(34) in the bound tRNA molecule. Does not show protein lysine acetyltransferase activity. The sequence is that of tRNA uridine(34) acetyltransferase from Dehalococcoides mccartyi (strain CBDB1).